Here is a 288-residue protein sequence, read N- to C-terminus: Rhox homeobox family member 2B (288 aa).

Residues 16 to 136 are disordered; that stretch reads SPAVDDEKEL…GLEPGNAQQP (121 aa). A compositionally biased stretch (acidic residues) spans 39–48; that stretch reads VKEEEEDAQP. Residues 68–80 are compositionally biased toward basic and acidic residues; sequence GEEKDGGGEEKDG. A DNA-binding region (homeobox) is located at residues 134–193; it reads QQPNVHAFTPLQLQELECIFQREQFPSEFLRRRLARSMNVTELAVQIWFENRRAKWRRHQ. A Nuclear localization signal motif is present at residues 186–195; that stretch reads RAKWRRHQRA.

The protein belongs to the paired-like homeobox family. PEPP subfamily. As to expression, expressed in testis, mainly expressed in germ cells, but also detected in somatic cells such as Sertoli cells, Leydig cells and peritubular cells.

Its subcellular location is the nucleus. Its function is as follows. Transcription factor maybe involved in reproductive processes. Modulates expression of target genes encoding proteins involved in processes relevant to spermatogenesis. The sequence is that of Rhox homeobox family member 2B from Homo sapiens (Human).